Reading from the N-terminus, the 940-residue chain is Isoleucine--tRNA ligase (940 aa).

Positions 58–68 match the 'HIGH' region motif; that stretch reads PYANGSIHIGH. Position 564 (Glu564) interacts with L-isoleucyl-5'-AMP. Positions 605–609 match the 'KMSKS' region motif; sequence KMSKS. Residue Lys608 coordinates ATP. Cys903, Cys906, Cys923, and Cys926 together coordinate Zn(2+).

It belongs to the class-I aminoacyl-tRNA synthetase family. IleS type 1 subfamily. As to quaternary structure, monomer. Zn(2+) serves as cofactor.

Its subcellular location is the cytoplasm. The enzyme catalyses tRNA(Ile) + L-isoleucine + ATP = L-isoleucyl-tRNA(Ile) + AMP + diphosphate. Catalyzes the attachment of isoleucine to tRNA(Ile). As IleRS can inadvertently accommodate and process structurally similar amino acids such as valine, to avoid such errors it has two additional distinct tRNA(Ile)-dependent editing activities. One activity is designated as 'pretransfer' editing and involves the hydrolysis of activated Val-AMP. The other activity is designated 'posttransfer' editing and involves deacylation of mischarged Val-tRNA(Ile). The protein is Isoleucine--tRNA ligase of Shewanella amazonensis (strain ATCC BAA-1098 / SB2B).